A 736-amino-acid chain; its full sequence is MEIGTEISRKIRSAIKGKLQELGAYVDEELPDYIMVMVANKKSQDQMTEDLSLFLGNNTIRFTVWLHGVLDKLRSVTTEPSSLKSSDTNIFDSNVPSNKSNFSRGDERRHEAAVPPLAIPSARPEKRDSRVSTSSQESKTTNVRQTYDDGAATRLMSTVKPLREPAPSEDVIDIKPEPDDLIDEDLNFVQENPLSQKKPTVTLTYGSSRPSIEIYRPPASRNADSGVHLNRLQFQQQQNSIHAAKQLDMQSSWVYETGRLCEPEVLNSLEETYSPFFRNNSEKMSMEDENFRKRKLPVVSSVVKVKKFNHDGEEEEEDDDYGSRTGSISSSVSVPAKPERRPSLPPSKQANKNLILKAISEAQESVTKTTNYSTVPQKQTLPVAPRTRTSQEELLAEVVQGQSRTPRISPPIKEEETKGDSVEKNQGTQQRQLLSRLQIDPVMAETLQMSQDYYDMESMVHADTRSFILKKPKLSEEVVVAPNQESGMKTADSLRVLSGHLMQTRDLVQPDKPASPKFIVTLDGVPSPPGYMSDQEEDMCFEGMKPVNQTAASNKGLRGLLHPQQLHLLSRQLEDPNGSFSNAEMSELSVAQKPEKLLERCKYWPACKNGDECAYHHPISPCKAFPNCKFAEKCLFVHPNCKYDAKCTKPDCPFTHVSRRIPVLSPKPAVAPPAPPSSSQLCRYFPACKKMECPFYHPKHCRFNTQCTRPDCTFYHPTINVPPRHALKWIRPQTSE.

The residue at position 1 (M1) is an N-acetylmethionine. Composition is skewed to polar residues over residues 77–103 (TTEP…SNFS) and 131–145 (VSTS…NVRQ). A disordered region spans residues 77–145 (TTEPSSLKSS…QESKTTNVRQ (69 aa)). S85 is modified (phosphoserine). Glycyl lysine isopeptide (Lys-Gly) (interchain with G-Cter in SUMO2) cross-links involve residues K99, K139, K175, and K198. Residue S240 is modified to Phosphoserine. A Glycyl lysine isopeptide (Lys-Gly) (interchain with G-Cter in SUMO2) cross-link involves residue K245. Position 281 is a phosphoserine (S281). Residues K283 and K295 each participate in a glycyl lysine isopeptide (Lys-Gly) (interchain with G-Cter in SUMO2) cross-link. Residues 310 to 350 (HDGEEEEEDDDYGSRTGSISSSVSVPAKPERRPSLPPSKQA) are disordered. 2 positions are modified to phosphoserine: S327 and S343. K357 carries the post-translational modification N6-acetyllysine; alternate. K357 participates in a covalent cross-link: Glycyl lysine isopeptide (Lys-Gly) (interchain with G-Cter in SUMO2); alternate. K378 participates in a covalent cross-link: Glycyl lysine isopeptide (Lys-Gly) (interchain with G-Cter in SUMO2). 2 positions are modified to phosphoserine: S390 and S409. Residues 398–430 (VVQGQSRTPRISPPIKEEETKGDSVEKNQGTQQ) are disordered. A compositionally biased stretch (basic and acidic residues) spans 412–423 (IKEEETKGDSVE). Residue K413 forms a Glycyl lysine isopeptide (Lys-Gly) (interchain with G-Cter in SUMO2) linkage. The residue at position 421 (S421) is a Phosphoserine. K489 is covalently cross-linked (Glycyl lysine isopeptide (Lys-Gly) (interchain with G-Cter in SUMO2)). Phosphoserine occurs at positions 498, 515, 527, and 620. 5 C3H1-type zinc fingers span residues 595 to 620 (EKLL…HPIS), 621 to 640 (PCKA…VHPN), 641 to 656 (CKYD…PFTH), 682 to 699 (CRYF…YHPK), and 701 to 719 (CRFN…HPTI).

This sequence belongs to the ZC3H14 family. In terms of assembly, homodimer; facilitating circular RNAs (circRNAs) formation. Associates with the spliceosome. Interacts with HOOK2. Interacts with ZFC3H1 in a RNase-sensitive manner. Expressed in fetal and adult brain. Expressed in fetal and adult temporal lobe.

The protein resides in the nucleus speckle. Its subcellular location is the cytoplasm. RNA-binding protein involved in the biogenesis of circular RNAs (circRNAs), which are produced by back-splicing circularization of pre-mRNAs. Acts by binding to both exon-intron boundary and 3'-UTR of pre-mRNAs to promote circRNA biogenesis through dimerization and the association with the spliceosome. Required for spermatogenesis via involvement in circRNA biogenesis. Regulates the pre-mRNA processing of ATP5MC1; preventing its degradation. Also binds the poly(A) tail of mRNAs; controlling poly(A) length in neuronal cells. The polypeptide is Zinc finger CCCH domain-containing protein 14 (Homo sapiens (Human)).